The chain runs to 37 residues: Large ribosomal subunit protein bL36 (37 aa).

This sequence belongs to the bacterial ribosomal protein bL36 family.

In Mycoplasmopsis pulmonis (strain UAB CTIP) (Mycoplasma pulmonis), this protein is Large ribosomal subunit protein bL36.